The chain runs to 180 residues: Shikimate kinase (180 aa).

14–19 (GAGKST) is an ATP binding site. Serine 18 provides a ligand contact to Mg(2+). Residues aspartate 36, arginine 60, and glycine 82 each coordinate substrate. Arginine 120 serves as a coordination point for ATP. Residue arginine 140 participates in substrate binding. Glutamine 157 contributes to the ATP binding site.

Belongs to the shikimate kinase family. In terms of assembly, monomer. The cofactor is Mg(2+).

It localises to the cytoplasm. It catalyses the reaction shikimate + ATP = 3-phosphoshikimate + ADP + H(+). Its pathway is metabolic intermediate biosynthesis; chorismate biosynthesis; chorismate from D-erythrose 4-phosphate and phosphoenolpyruvate: step 5/7. Functionally, catalyzes the specific phosphorylation of the 3-hydroxyl group of shikimic acid using ATP as a cosubstrate. In Haemophilus influenzae (strain PittEE), this protein is Shikimate kinase.